The chain runs to 234 residues: UPF0758 protein Smlt0399 (234 aa).

Residues 103–225 form the MPN domain; it reads VGNNPAAVGR…PVSFAERGLL (123 aa). Positions 174, 176, and 187 each coordinate Zn(2+). A JAMM motif motif is present at residues 174-187; it reads HNHPSGDPEPSSAD.

The protein belongs to the UPF0758 family.

The polypeptide is UPF0758 protein Smlt0399 (Stenotrophomonas maltophilia (strain K279a)).